We begin with the raw amino-acid sequence, 405 residues long: MVSLIILFRLTFAIANRVRTLMKVLVIVSFFVLTGSASADSGALSLSGAAEALCNASKRLKSVYAFVQAKTKYATEKVREFEDMVELVRLKIVRVRGNEGGNGNWTSCTGIAKFLKRVGSKVNRVKRRELKRLRYLGYSAVGAAGIAAGRLDEMINVWRRAYSSGKGDFCVGNSEHHATRNQLLNCYLSDSEKDEFISLGDMHRMERVEEMNMTRESMNELLRLTGGGGNPLERYVHSANCHLTNTRPGGGYLSENSTSRRILWGDGIISLKRSGRGFVGGTGKTRAEVLIHDVTWEEDPVNNVPVLRNAYRELRKFVNLYAYIEELAHETGAHWNWEYAQAIVNTGTHGNKSTVVVDEDSGKSFVVLGNRETVQEEKLLEEMAICGVGRADSLRRTLALLFLLF.

The first 50 residues, 1–50, serve as a signal peptide directing secretion; the sequence is MVSLIILFRLTFAIANRVRTLMKVLVIVSFFVLTGSASADSGALSLSGAA. N55, N104, N256, and N351 each carry an N-linked (GlcNAc...) asparagine glycan. Residue A391 is the site of GPI-anchor amidated alanine attachment. A propeptide spans 392–405 (removed in mature form); the sequence is DSLRRTLALLFLLF.

It is found in the cell membrane. This Trypanosoma brucei brucei protein is Protein PAG1 (PAG1).